We begin with the raw amino-acid sequence, 129 residues long: MKEVIDTVGRRKTSVARVFMTPGKGRVIINKLPAEEYFKDEVKCRVALRPLVLAEKTEDFDIKVNVHGGGISGQSGAVSLAIARALAETDDSVRAVFKPERLLTRDPRMVERKKFGRKKARKSFQFSKR.

This sequence belongs to the universal ribosomal protein uS9 family.

The chain is Small ribosomal subunit protein uS9 from Chlorobium phaeovibrioides (strain DSM 265 / 1930) (Prosthecochloris vibrioformis (strain DSM 265)).